The following is a 368-amino-acid chain: N-acetylneuraminate epimerase (368 aa).

The signal sequence occupies residues 1–19 (MNKTITALTIIMASFATNA). Kelch repeat units lie at residues 40 to 84 (TVYI…AFID), 86 to 137 (NLYV…FVHN), 139 to 173 (KAYVTGGVNQNIFNGYFEDLNEAGKDSTTIDKINA), 174 to 219 (HYFD…VNKG), 222 to 265 (TWLI…VAGG), 287 to 336 (ENYQ…PWNN), and 338 to 367 (LLIIGGETAGGKAVTDSVLISVKDNKVTVQ). E228 serves as the catalytic Proton acceptor.

The protein belongs to the NanM family. In terms of assembly, homodimer.

It is found in the periplasm. The catalysed reaction is N-acetyl-alpha-neuraminate = N-acetyl-beta-neuraminate. Functionally, converts alpha-N-acetylneuranimic acid (Neu5Ac) to the beta-anomer, accelerating the equilibrium between the alpha- and beta-anomers. Probably facilitates sialidase-negative bacteria to compete successfully for limited amounts of extracellular Neu5Ac, which is likely taken up in the beta-anomer. In addition, the rapid removal of sialic acid from solution might be advantageous to the bacterium to damp down host responses. The protein is N-acetylneuraminate epimerase of Escherichia coli O1:K1 / APEC.